The following is a 436-amino-acid chain: ATP-dependent protease ATPase subunit HslU (436 aa).

ATP is bound by residues Ile-18, 60-65 (GVGKTE), Asp-249, Glu-314, and Arg-386.

This sequence belongs to the ClpX chaperone family. HslU subfamily. As to quaternary structure, a double ring-shaped homohexamer of HslV is capped on each side by a ring-shaped HslU homohexamer. The assembly of the HslU/HslV complex is dependent on binding of ATP.

It localises to the cytoplasm. In terms of biological role, ATPase subunit of a proteasome-like degradation complex; this subunit has chaperone activity. The binding of ATP and its subsequent hydrolysis by HslU are essential for unfolding of protein substrates subsequently hydrolyzed by HslV. HslU recognizes the N-terminal part of its protein substrates and unfolds these before they are guided to HslV for hydrolysis. This is ATP-dependent protease ATPase subunit HslU from Ruegeria sp. (strain TM1040) (Silicibacter sp.).